The chain runs to 359 residues: Alanine racemase (359 aa).

Lys-34 (proton acceptor; specific for D-alanine) is an active-site residue. N6-(pyridoxal phosphate)lysine is present on Lys-34. Arg-129 contacts substrate. The Proton acceptor; specific for L-alanine role is filled by Tyr-256. A substrate-binding site is contributed by Met-304.

This sequence belongs to the alanine racemase family. It depends on pyridoxal 5'-phosphate as a cofactor.

It catalyses the reaction L-alanine = D-alanine. The protein operates within amino-acid biosynthesis; D-alanine biosynthesis; D-alanine from L-alanine: step 1/1. Catalyzes the interconversion of L-alanine and D-alanine. May also act on other amino acids. The polypeptide is Alanine racemase (alr) (Photobacterium profundum (strain SS9)).